The following is a 156-amino-acid chain: Large ribosomal subunit protein uL15 (156 aa).

Residues 14–35 (GSRTHGWGRVGQHRKSGSSGGK) form a disordered region.

This sequence belongs to the universal ribosomal protein uL15 family. In terms of assembly, part of the 50S ribosomal subunit.

Binds to the 23S rRNA. The protein is Large ribosomal subunit protein uL15 of Pyrobaculum islandicum (strain DSM 4184 / JCM 9189 / GEO3).